A 145-amino-acid polypeptide reads, in one-letter code: Large ribosomal subunit protein uL13 (145 aa).

Belongs to the universal ribosomal protein uL13 family. Part of the 50S ribosomal subunit.

Its function is as follows. This protein is one of the early assembly proteins of the 50S ribosomal subunit, although it is not seen to bind rRNA by itself. It is important during the early stages of 50S assembly. This chain is Large ribosomal subunit protein uL13, found in Bacillus pumilus (strain SAFR-032).